A 311-amino-acid polypeptide reads, in one-letter code: Probable manganese-dependent inorganic pyrophosphatase (311 aa).

Residues His-9, Asp-13, Asp-15, Asp-77, His-99, and Asp-151 each coordinate Mn(2+).

Belongs to the PPase class C family. It depends on Mn(2+) as a cofactor.

It is found in the cytoplasm. The catalysed reaction is diphosphate + H2O = 2 phosphate + H(+). This is Probable manganese-dependent inorganic pyrophosphatase from Streptococcus equi subsp. equi (strain 4047).